The primary structure comprises 312 residues: Probable carboxylesterase 7 (312 aa).

Residue Met-1 is modified to N-acetylmethionine. Positions 75 to 77 (HGG) match the Involved in the stabilization of the negatively charged intermediate by the formation of the oxyanion hole motif. Residues Ser-159, Asp-255, and His-287 contribute to the active site.

Belongs to the 'GDXG' lipolytic enzyme family. As to expression, expressed in leaves, stems, flowers and siliques.

The enzyme catalyses a carboxylic ester + H2O = an alcohol + a carboxylate + H(+). Its function is as follows. Carboxylesterase acting on esters with varying acyl chain length. The sequence is that of Probable carboxylesterase 7 (CXE7) from Arabidopsis thaliana (Mouse-ear cress).